The sequence spans 325 residues: Eukaryotic translation initiation factor 3 subunit I (325 aa).

5 WD repeats span residues 8-47 (GHER…RLGT), 50-89 (GHTG…QLAL), 144-183 (CSES…IVNS), 186-225 (EHSK…HQKT), and 283-324 (GHFG…FEFE).

It belongs to the eIF-3 subunit I family. In terms of assembly, component of the eukaryotic translation initiation factor 3 (eIF-3) complex, which is composed of 13 subunits: eif3a, eif3b, eif3c, eif3d, eif3e, eif3f, eif3g, eif3h, eif3i, eif3j, eif3k, eif3l and eif3m.

It is found in the cytoplasm. Component of the eukaryotic translation initiation factor 3 (eIF-3) complex, which is involved in protein synthesis of a specialized repertoire of mRNAs and, together with other initiation factors, stimulates binding of mRNA and methionyl-tRNAi to the 40S ribosome. The eIF-3 complex specifically targets and initiates translation of a subset of mRNAs involved in cell proliferation. This is Eukaryotic translation initiation factor 3 subunit I (eif3i) from Xenopus tropicalis (Western clawed frog).